We begin with the raw amino-acid sequence, 1427 residues long: MNQLTNFMNPVAKPETFDMIKIGIASPERIRSWSFGEIKKPETINYRTFKPERDGLFCARIFGPIKDYECLCGKYKRMKYKGIVCEKCGVEVTVTKVRRERMGHIELAAPVAHIWFLKSLPSRIGLLLDMQLKQLERVLYFEAYIVLEPGLTPLEKFQLLTEDELLDAQDEYGEDAFSAGIGAEAIRTLLENLDLEQERTDLMEELATTKSELKPKKIIKRLKVVESFIESGNRPEWMILEVVPVIPPELRPLVPLDGGRFATSDLNDLYRRVINRNNRLKRLMELRAPDIIVRNEKRMLQEAVDALFDNGRRGRTITGANKRPLKSLSDMLKGKQGRFRQNLLGKRVDYSGRSVIVTGPELKLHQCGLPKKMALELFKPFIYARLDAKGLSMTLKQAKKWVEKERKEVWDILDEVIREHPVLLNRAPTLHRLGIQAFEPVLIEGKAIQLHPLVCAAFNADFDGDQMAVHVPLSLEAQLEARVLMMSTNNILSPANGKPIIVPSQDMVLGLYYLSLEREGEPGEGMLLADMAEVHQALHIGAVTLHSKIISRVPQTDEKGNEYLKRFETTPGRMLIGECLPKSHTVPFDVVNRLLTKKEIGDVIDQVYRHTGQKETVLFADAIMALGFRHAFKAGISFGKDDMIIPASKEQLVDETRSLVKDFEQQYQDGLITQQEKYNKAIDAWSQCGDKVANAMMDEIRATPKLPDGRLAPINSIYMMAHSGARGSQAQMKQLAGMRGLMAKPSGEIIETPIISNFKEGLTVLEYFNSTHGARKGLADTALKTANSGYLTRRLVDVSQDCVVIEEDCGTTRGMEMRAIIQGGSTIASLGERILGRTTLEDVVDKDGNVIAPVGTLLDEATTQRIEEAEVQSVKIRSPLVCEATLGVCGKCYGRDLARGTPVNIGEAVGVIAAQSIGEPGTQLTMRTFHIGGAAQVNEQSNVEAISDGTIEYRDMATIVDQRGRRLALSRSGEIAIIDSEGRERASHKLPYGAQIMHKDGEKVKKGDRIAEWDPFTMPLITEKQGVVKYQDLIDGKTLTEQVDEATGIAQRVVIEYRAAGRSKKEDLQPRITLLDDASGEAARYLLAVGTMISVEDGQTVQAGDVLARVSREASKTRDITGGLPRVAELFEARIPKDNSVIAKISGRIEFVKDYKAKRKIAIVPEEGDPIEYLIPKSKVLEVQEGDMVKRGDALISGSPNPHDILDVMGVEALAEYLVAEIQEVYRLQGVKINDKHIEVIVRQMLQKVEITDGGDTTLLPGEQLDYLEMMEYNAKLPKNGKPAEGRPVLLGITKASLQTRSFVSAASFQETTRVLTEASVQGKVDSLQGLKENVIVGRLIPAGTGAAMNRVRVTASSKDAALRAAMRVANQEHLIAPRTAAEEHAAELAQGPEAAIGDDPLGKVQGEDFTTDDVMVEERPEGASEE.

The Zn(2+) site is built by Cys-70, Cys-72, Cys-85, and Cys-88. Residues Asp-461, Asp-463, and Asp-465 each coordinate Mg(2+). Zn(2+) is bound by residues Cys-809, Cys-882, Cys-889, and Cys-892. The disordered stretch occupies residues 1394 to 1427 (EAAIGDDPLGKVQGEDFTTDDVMVEERPEGASEE). The span at 1417-1427 (VEERPEGASEE) shows a compositional bias: basic and acidic residues.

Belongs to the RNA polymerase beta' chain family. In terms of assembly, the RNAP catalytic core consists of 2 alpha, 1 beta, 1 beta' and 1 omega subunit. When a sigma factor is associated with the core the holoenzyme is formed, which can initiate transcription. Requires Mg(2+) as cofactor. The cofactor is Zn(2+).

It carries out the reaction RNA(n) + a ribonucleoside 5'-triphosphate = RNA(n+1) + diphosphate. In terms of biological role, DNA-dependent RNA polymerase catalyzes the transcription of DNA into RNA using the four ribonucleoside triphosphates as substrates. The polypeptide is DNA-directed RNA polymerase subunit beta' (Sphingopyxis alaskensis (strain DSM 13593 / LMG 18877 / RB2256) (Sphingomonas alaskensis)).